The sequence spans 441 residues: Aminopeptidase C (441 aa).

Active-site residues include C70, H361, and N382.

The protein belongs to the peptidase C1 family.

The enzyme catalyses Inactivates bleomycin B2 (a cytotoxic glycometallopeptide) by hydrolysis of a carboxyamide bond of beta-aminoalanine, but also shows general aminopeptidase activity. The specificity varies somewhat with source, but amino acid arylamides of Met, Leu and Ala are preferred.. This is Aminopeptidase C (pepC) from Listeria monocytogenes serovar 1/2a (strain ATCC BAA-679 / EGD-e).